A 103-amino-acid polypeptide reads, in one-letter code: Small ribosomal subunit protein cS23 (103 aa).

The protein belongs to the chloroplast-specific ribosomal protein cS23 family. In terms of assembly, part of the 30S ribosomal subunit.

The protein resides in the plastid. Its subcellular location is the chloroplast. In terms of biological role, probably a ribosomal protein or a ribosome-associated protein. This Euglena granulata protein is Small ribosomal subunit protein cS23 (ycf65).